We begin with the raw amino-acid sequence, 283 residues long: Nudix hydrolase 6 (283 aa).

A Nudix hydrolase domain is found at 101-233 (SHRIGVGAFV…KKELFRFMAN (133 aa)). Residues 139 to 160 (GVVKEGENIWEGALREVEEETG) carry the Nudix box motif. The a divalent metal cation site is built by E154, E158, and E204.

The protein belongs to the Nudix hydrolase family. Mg(2+) serves as cofactor. Mn(2+) is required as a cofactor. Expressed in stems and leaves. Weakly or not expressed in roots.

It carries out the reaction ADP-D-ribose + H2O = D-ribose 5-phosphate + AMP + 2 H(+). It catalyses the reaction NAD(+) + H2O = beta-nicotinamide D-ribonucleotide + AMP + 2 H(+). The catalysed reaction is NADH + H2O = reduced beta-nicotinamide D-ribonucleotide + AMP + 2 H(+). In terms of biological role, probably mediates the hydrolysis of some nucleoside diphosphate derivatives. In vitro, it can use both NADH and ADP-ribose as substrates; however the relevance of such substrates in vivo is unclear. The protein is Nudix hydrolase 6 of Arabidopsis thaliana (Mouse-ear cress).